The following is a 1368-amino-acid chain: Mediator of RNA polymerase II transcription subunit 23 (1368 aa).

Residues 1343–1368 (VPPQAMNSGSPAPQSNQVPVSLPVTQ) form a disordered region. Positions 1347-1368 (AMNSGSPAPQSNQVPVSLPVTQ) are enriched in polar residues.

It belongs to the Mediator complex subunit 23 family. Interacts with ELK1. Component of the Mediator complex, which is composed of MED1, MED4, MED6, MED7, MED8, MED9, MED10, MED11, MED12, MED13, MED13L, MED14, MED15, MED16, MED17, MED18, MED19, MED20, MED21, MED22, MED23, MED24, MED25, MED26, MED27, MED29, MED30, MED31, CCNC, CDK8 and CDC2L6/CDK11. The MED12, MED13, CCNC and CDK8 subunits form a distinct module termed the CDK8 module. Mediator containing the CDK8 module is less active than Mediator lacking this module in supporting transcriptional activation. Individual preparations of the Mediator complex lacking one or more distinct subunits have been variously termed ARC, CRSP, DRIP, PC2, SMCC and TRAP. Interacts with CEBPB (when not methylated), CTNNB1, and GLI3. Interacts with the adenovirus E1A protein.

Its subcellular location is the nucleus. Functionally, required for transcriptional activation subsequent to the assembly of the pre-initiation complex. Component of the Mediator complex, a coactivator involved in the regulated transcription of nearly all RNA polymerase II-dependent genes. Mediator functions as a bridge to convey information from gene-specific regulatory proteins to the basal RNA polymerase II transcription machinery. Mediator is recruited to promoters by direct interactions with regulatory proteins and serves as a scaffold for the assembly of a functional pre-initiation complex with RNA polymerase II and the general transcription factors. Required for transcriptional activation by adenovirus E1A protein. Required for ELK1-dependent transcriptional activation in response to activated Ras signaling. This Homo sapiens (Human) protein is Mediator of RNA polymerase II transcription subunit 23 (MED23).